A 343-amino-acid chain; its full sequence is MAEYDHYEDDEFFNSFNDSSQKEHQDFLQFSKVFLPCMYLVVFVCGLVGNSLVLVISIFYHKLQSLTDVFLVNLPLADLVFVCTLPFWAYAGIHEWIFGQVMCKTLLGVYTINFYTSMLILTCITVDRFIVVVKATKAYNQQAKRMTWGKVICLLIWVISLLVSLPQIIYGNVFNLDKLICRYHDEEISTVVLATQMTLGFFLPLLTMIVCYSVIIKTLLHAGGFQKHRSLKIIFLVMAVFLLTQTPFNLVKLIRSTHWEYYAMTSFHYTIIVTEAIAYLRACLNPVLYAFVSLKFRKNFWKLVKDIGCLPYLGVSHQWKSSEDNSKTFSASHNVEATSMFQL.

At 1–33 (MAEYDHYEDDEFFNSFNDSSQKEHQDFLQFSKV) the chain is on the extracellular side. Asn17 carries N-linked (GlcNAc...) asparagine glycosylation. A helical transmembrane segment spans residues 34–60 (FLPCMYLVVFVCGLVGNSLVLVISIFY). Residues 61 to 69 (HKLQSLTDV) are Cytoplasmic-facing. A helical membrane pass occupies residues 70 to 90 (FLVNLPLADLVFVCTLPFWAY). The Extracellular segment spans residues 91–104 (AGIHEWIFGQVMCK). An intrachain disulfide couples Cys103 to Cys181. A helical membrane pass occupies residues 105–126 (TLLGVYTINFYTSMLILTCITV). Over 127–144 (DRFIVVVKATKAYNQQAK) the chain is Cytoplasmic. The chain crosses the membrane as a helical span at residues 145–165 (RMTWGKVICLLIWVISLLVSL). The Extracellular segment spans residues 166 to 188 (PQIIYGNVFNLDKLICRYHDEEI). Residues 189 to 216 (STVVLATQMTLGFFLPLLTMIVCYSVII) traverse the membrane as a helical segment. At 217–232 (KTLLHAGGFQKHRSLK) the chain is on the cytoplasmic side. Residues 233–260 (IIFLVMAVFLLTQTPFNLVKLIRSTHWE) form a helical membrane-spanning segment. Residues 261–276 (YYAMTSFHYTIIVTEA) lie on the Extracellular side of the membrane. The helical transmembrane segment at 277 to 294 (IAYLRACLNPVLYAFVSL) threads the bilayer. Residues 295–343 (KFRKNFWKLVKDIGCLPYLGVSHQWKSSEDNSKTFSASHNVEATSMFQL) are Cytoplasmic-facing.

This sequence belongs to the G-protein coupled receptor 1 family.

The protein localises to the cell membrane. Receptor for the C-X-C chemokine CXCL16. Used as a coreceptor by SIVs and by strains of HIV-2 and m-tropic HIV-1. The protein is C-X-C chemokine receptor type 6 (CXCR6) of Cercocebus atys (Sooty mangabey).